Reading from the N-terminus, the 203-residue chain is MGALKYLEELQKKKQSDVVRFLLRVRCWELRQLNVIHRASRPSRPDKARRLGYKAKQGYVIYRARVRRGGRKKPVPKGATYGKPTNQGVNQLKYQRSLKSTAEERVGRRCANLRVLNSYWINQDSTYKYFEVILVDPQHKAIRRDPRINWIVNPVHKHRESRGLTSTGKRSRGLNKGHRYNKTRAGRRKTWKRHNTLSLWRYR.

Positions Glu160–Gly186 are disordered. Over residues Lys169–Gly186 the composition is skewed to basic residues.

Belongs to the eukaryotic ribosomal protein eL15 family. Component of the large ribosomal subunit (LSU). Mature N.crassa ribosomes consist of a small (40S) and a large (60S) subunit. The 40S small subunit contains 1 molecule of ribosomal RNA (18S rRNA) and at least 32 different proteins. The large 60S subunit contains 3 rRNA molecules (26S, 5.8S and 5S rRNA) and at least 42 different proteins.

The protein localises to the cytoplasm. Component of the ribosome, a large ribonucleoprotein complex responsible for the synthesis of proteins in the cell. The small ribosomal subunit (SSU) binds messenger RNAs (mRNAs) and translates the encoded message by selecting cognate aminoacyl-transfer RNA (tRNA) molecules. The large subunit (LSU) contains the ribosomal catalytic site termed the peptidyl transferase center (PTC), which catalyzes the formation of peptide bonds, thereby polymerizing the amino acids delivered by tRNAs into a polypeptide chain. The nascent polypeptides leave the ribosome through a tunnel in the LSU and interact with protein factors that function in enzymatic processing, targeting, and the membrane insertion of nascent chains at the exit of the ribosomal tunnel. This Neurospora crassa (strain ATCC 24698 / 74-OR23-1A / CBS 708.71 / DSM 1257 / FGSC 987) protein is Large ribosomal subunit protein eL15 (rpl-15).